The primary structure comprises 220 residues: Chalcone--flavanone isomerase B (220 aa).

Substrate is bound by residues Thr50, Asn115, and Thr192.

The protein belongs to the chalcone isomerase family.

It catalyses the reaction a chalcone = a flavanone.. It participates in secondary metabolite biosynthesis; flavonoid biosynthesis. Functionally, catalyzes the intramolecular cyclization of bicyclic chalcones into tricyclic (S)-flavanones. Responsible for the isomerization of 4,2',4',6'-tetrahydroxychalcone (also termed chalcone) into naringenin. This chain is Chalcone--flavanone isomerase B (CHI2), found in Petunia hybrida (Petunia).